The primary structure comprises 34 residues: MSDIN-like toxin proprotein 4 (34 aa).

The propeptide occupies 1–10; it reads MSDINATRLP. The segment at residues 11-17 is a cross-link (cyclopeptide (Val-Pro)); that stretch reads VWIGYSP. The propeptide occupies 18 to 34; that stretch reads CVGDDCIALLTRGEGLC.

Belongs to the MSDIN fungal toxin family. In terms of processing, processed by the macrocyclase-peptidase enzyme POPB to yield a toxic cyclic heptapeptide. POPB first removes 10 residues from the N-terminus. Conformational trapping of the remaining peptide forces the enzyme to release this intermediate rather than proceed to macrocyclization. The enzyme rebinds the remaining peptide in a different conformation and catalyzes macrocyclization of the N-terminal 7 residues. As to expression, expressed in basidiocarps.

Probable toxin that belongs to the MSDIN-like toxin family responsible for a large number of food poisoning cases and deaths. The chain is MSDIN-like toxin proprotein 4 from Amanita exitialis (Guangzhou destroying angel).